The chain runs to 447 residues: Serine/threonine-protein phosphatase 2A 55 kDa regulatory subunit B gamma isoform (447 aa).

WD repeat units follow at residues 22–61 (TEAD…KNAP), 87–128 (EIEE…KRPE), 171–209 (GHTY…RSFN), 220–260 (DLTE…LCDK), 279–317 (EIIS…RPIE), 334–375 (ENDC…DVTL), and 410–446 (DFTK…NSDM).

It belongs to the phosphatase 2A regulatory subunit B family. PP2A consists of a common heterodimeric core enzyme, composed of a 36 kDa catalytic subunit (subunit C) and a 65 kDa constant regulatory subunit (PR65 or subunit A), that associates with a variety of regulatory subunits. Proteins that associate with the core dimer include three families of regulatory subunits B (the R2/B/PR55/B55, R3/B''/PR72/PR130/PR59 and R5/B'/B56 families), the 48 kDa variable regulatory subunit, viral proteins, and cell signaling molecules. Interacts with IER5.

In terms of biological role, the B regulatory subunit might modulate substrate selectivity and catalytic activity, and might also direct the localization of the catalytic enzyme to a particular subcellular compartment. The polypeptide is Serine/threonine-protein phosphatase 2A 55 kDa regulatory subunit B gamma isoform (PPP2R2C) (Homo sapiens (Human)).